A 665-amino-acid polypeptide reads, in one-letter code: DNA ligase (665 aa).

Residues 32 to 36 (DSEYD), 81 to 82 (SL), and glutamate 110 contribute to the NAD(+) site. Catalysis depends on lysine 112, which acts as the N6-AMP-lysine intermediate. Arginine 133, glutamate 167, lysine 283, and lysine 307 together coordinate NAD(+). Zn(2+) contacts are provided by cysteine 401, cysteine 404, cysteine 419, and cysteine 424. A BRCT domain is found at 586–665 (EGHPDFSGKT…AAFIEKQNGI (80 aa)).

The protein belongs to the NAD-dependent DNA ligase family. LigA subfamily. It depends on Mg(2+) as a cofactor. Requires Mn(2+) as cofactor.

The catalysed reaction is NAD(+) + (deoxyribonucleotide)n-3'-hydroxyl + 5'-phospho-(deoxyribonucleotide)m = (deoxyribonucleotide)n+m + AMP + beta-nicotinamide D-nucleotide.. In terms of biological role, DNA ligase that catalyzes the formation of phosphodiester linkages between 5'-phosphoryl and 3'-hydroxyl groups in double-stranded DNA using NAD as a coenzyme and as the energy source for the reaction. It is essential for DNA replication and repair of damaged DNA. The protein is DNA ligase of Staphylococcus epidermidis (strain ATCC 12228 / FDA PCI 1200).